A 58-amino-acid polypeptide reads, in one-letter code: UPF0339 protein TDE_0826 (58 aa).

It belongs to the UPF0339 family.

This Treponema denticola (strain ATCC 35405 / DSM 14222 / CIP 103919 / JCM 8153 / KCTC 15104) protein is UPF0339 protein TDE_0826.